A 382-amino-acid polypeptide reads, in one-letter code: UDP-4-amino-4-deoxy-L-arabinose--oxoglutarate aminotransferase (382 aa).

Residue lysine 183 is modified to N6-(pyridoxal phosphate)lysine.

Belongs to the DegT/DnrJ/EryC1 family. ArnB subfamily. Homodimer. Pyridoxal 5'-phosphate serves as cofactor.

The catalysed reaction is UDP-4-amino-4-deoxy-beta-L-arabinose + 2-oxoglutarate = UDP-beta-L-threo-pentopyranos-4-ulose + L-glutamate. Its pathway is nucleotide-sugar biosynthesis; UDP-4-deoxy-4-formamido-beta-L-arabinose biosynthesis; UDP-4-deoxy-4-formamido-beta-L-arabinose from UDP-alpha-D-glucuronate: step 2/3. It functions in the pathway bacterial outer membrane biogenesis; lipopolysaccharide biosynthesis. In terms of biological role, catalyzes the conversion of UDP-4-keto-arabinose (UDP-Ara4O) to UDP-4-amino-4-deoxy-L-arabinose (UDP-L-Ara4N). The modified arabinose is attached to lipid A and is required for resistance to polymyxin and cationic antimicrobial peptides. The polypeptide is UDP-4-amino-4-deoxy-L-arabinose--oxoglutarate aminotransferase (Pseudomonas syringae pv. syringae (strain B728a)).